The following is a 226-amino-acid chain: MATEALHMHKDRLSAEDLDLKDPHVSSSLALFAIHNLIRRNLKACAEHAITVQPANIDAFVTYAKYTLHVLRDQLTSVDEIWFPVFAEHDPRFLAQKDAHDALYQRITAVDAQLATPPAELGQNELLSAEIAAAFAELHELTDKQYDLEEDLINQLGRKVPMDTIRGLEKKQEERRRADVKVYGHLWTAVYLLRGLDPKERAIFPPGIPKLIAGGMLTAGAMQFRR.

Its pathway is secondary metabolite biosynthesis. Its function is as follows. Part of the gene cluster that mediates the biosynthesis of the isocyanide xanthocillin and its derivatives. The first step of the pathway consists in the conversion of tyrosine into a vinyl-isonitrile intermediate by the isocyanide synthase xanB. Subsequent oxidative dimerization of this intermediate to form xanthocillin may involve the cytochrome P450 monooxygenase xanG, whose expression is coregulated with that of XanB. Xanthocillin can be further modified by the isonitrile hydratase-like protein xanA which introduces N-formyl groups and the methyltransferase xanE which introduces methyl groups, leading to the production of several derivatives including fumiformamide. Finally, fumiformamide can be subject to both oxidative and reductive cyclization to yield melanocins E and F, respectively. This chain is Xanthocillin biosynthesis cluster protein F, found in Aspergillus fumigatus (strain ATCC MYA-4609 / CBS 101355 / FGSC A1100 / Af293) (Neosartorya fumigata).